We begin with the raw amino-acid sequence, 207 residues long: Large ribosomal subunit protein uL4 (207 aa).

The interval 48 to 70 is disordered; the sequence is KAQKTRSEVSGGGAKPWRQKGTG.

It belongs to the universal ribosomal protein uL4 family. Part of the 50S ribosomal subunit.

In terms of biological role, one of the primary rRNA binding proteins, this protein initially binds near the 5'-end of the 23S rRNA. It is important during the early stages of 50S assembly. It makes multiple contacts with different domains of the 23S rRNA in the assembled 50S subunit and ribosome. Its function is as follows. Forms part of the polypeptide exit tunnel. In Francisella tularensis subsp. mediasiatica (strain FSC147), this protein is Large ribosomal subunit protein uL4.